The sequence spans 205 residues: Imidazole glycerol phosphate synthase subunit HisH (205 aa).

The Glutamine amidotransferase type-1 domain maps to 1–205; the sequence is MIALVDYGGG…FFKMALGDKK (205 aa). The active-site Nucleophile is C79. Active-site residues include H181 and E183.

Heterodimer of HisH and HisF.

The protein resides in the cytoplasm. The catalysed reaction is 5-[(5-phospho-1-deoxy-D-ribulos-1-ylimino)methylamino]-1-(5-phospho-beta-D-ribosyl)imidazole-4-carboxamide + L-glutamine = D-erythro-1-(imidazol-4-yl)glycerol 3-phosphate + 5-amino-1-(5-phospho-beta-D-ribosyl)imidazole-4-carboxamide + L-glutamate + H(+). It catalyses the reaction L-glutamine + H2O = L-glutamate + NH4(+). It participates in amino-acid biosynthesis; L-histidine biosynthesis; L-histidine from 5-phospho-alpha-D-ribose 1-diphosphate: step 5/9. Functionally, IGPS catalyzes the conversion of PRFAR and glutamine to IGP, AICAR and glutamate. The HisH subunit catalyzes the hydrolysis of glutamine to glutamate and ammonia as part of the synthesis of IGP and AICAR. The resulting ammonia molecule is channeled to the active site of HisF. In Dehalococcoides mccartyi (strain ATCC BAA-2266 / KCTC 15142 / 195) (Dehalococcoides ethenogenes (strain 195)), this protein is Imidazole glycerol phosphate synthase subunit HisH.